A 451-amino-acid chain; its full sequence is Rab GDP-dissociation inhibitor (451 aa).

Interaction with YPT1 stretches follow at residues 106-112 (RYVDFKQ) and 234-259 (YPMY…TYML).

This sequence belongs to the Rab GDI family. In terms of assembly, interacts with the GDP-bound form of Rab GTPase YPT1. Interacts with YPT10.

It localises to the cytoplasm. Functionally, regulates the GDP/GTP exchange reaction of SEC4 by inhibiting the dissociation of GDP from it, and the subsequent binding of GTP to SEC4. Plays an essential role in the yeast secretory pathway. Extracts GDP-bound YPT7 from vacuolar membranes, antagonizing vacuolar membrane fusion. This Saccharomyces cerevisiae (strain ATCC 204508 / S288c) (Baker's yeast) protein is Rab GDP-dissociation inhibitor (GDI1).